The sequence spans 133 residues: Small ribosomal subunit protein uS8 (133 aa).

This sequence belongs to the universal ribosomal protein uS8 family. Part of the 30S ribosomal subunit. Contacts proteins S5 and S12.

In terms of biological role, one of the primary rRNA binding proteins, it binds directly to 16S rRNA central domain where it helps coordinate assembly of the platform of the 30S subunit. This Rippkaea orientalis (strain PCC 8801 / RF-1) (Cyanothece sp. (strain PCC 8801)) protein is Small ribosomal subunit protein uS8.